Reading from the N-terminus, the 1822-residue chain is MSEILCQWLNKELKVSRTVSPKSFAKAFSSGYLLGEVLHKFELQDDFSEFLDSRVSSAKLNNFSRLEPTLNLLGVQFDQNVAHGIITEKPGVATKLLYQLYIALQKKKKSGLTGVEMQTMQRLTNLRLQNMKSDTFQERLRHMIPRQTDFNLMRITYRFQEKYKHVKEDLAHLHFEKLERFQKLKEEQRCFDIEKQYLNRRRQNEIMAKIQAAIIQIPKPASNRTLKALEAQKMMKKKKEAEDVADEIKKFEALIKKDLQAKESASKTSLDTAGQTTTDLLNTYSDDEYIKKIQKRLEEDAFAREQREKRRRKLLMDQLIAHEAQEEAYREEQLINRLMRQSQQERRIAVQLMHVRHEKEVLWQNRIFREKQHEERRLKDFQDALDREAALAKQAKIDFEEQFLKEKRFHDQIAVERAQARYEKHYSVCAEILDQIVDLSTKVADYRMLTNNLIPYKLMHDWKELFFNAKPIYEQASVKTLPANPSREQLTELEKRDLLDTNDYEEYKNMVGEWALPEEMVDNLPPSNNCILGHILHRLAEKSLPPRAESTTPELPSFAVKGCLLGKTLSGKTTILRSLQKDFPIQILSIDTLVQEAIQAFHDNEKVSEVLPIQKNDEEDALPVLQEEIKESQDPQHVFSAGPVSDEVLPETEGETMLSANADKTPKAEEVKSSDSFLKLTTRAQLGAKSEQLLKKGKSIPDVLLVDIIVNAINEIPVNQDCILDGFPMTLNQAQLLEEALTGCNRNLTEVERKKAQKSTLAIDPATSKEIPLPSPAFDFVILLDVSDTSSMSRMNDIIAEELSYKTAHEDISQRVAAENQDKDGDQNLRDQIQHRIIGFLDNWPLLEQWFSEPENILIKINAEIDKESLCEKVKEILTTEIAKKKNKVEKKLEEKEAEKKAAASLAELPLPTPPPAPPPEPEKEKEIHQSHVASKTPTAKGKPQSEAPHGKQESLQEGKGKKGETALKRKGSPKGKSSGGKVPVKKSPADSTDTSPVAIVPQPPKPGSEEWVYVNEPVPEEMPLFLVPYWELIENSYINTIKTVLRHLREDQHTVLAYLYEIRTSFQEFLKRPDHKQDFVAQWQADFNSLPDDLWDDEETKAELHQRVNDLRDRLWDICDARKEEAEQERLDIINESWLQDTLGMTMNHFFSLMQAELNRFQDTKRLLQDYYWGMESKIPVEDNKRFTRIPLVQLDSKDNSESQLRIPLVPRISISLETVTPKPKTKSVLKGKMDNSLENVESNFEADEKLVMDTWQQASLAVSHMVAAEIHQRLMEEEKENQPADPKEKSPQMGANKKVKKEPPKKKQEDKKPKGKSPPMAEATPVIVTTEEIAEIKRKNELRVKIKEEHLAALQFEEIATQFRLELIKTKALALLEDLVTKVVDVYKLMEKWLGERYLNEMASTEKLTDVARYHIETSTKIQNELYLSQEDFFINGNIKVFPDPPPSIRPPPVEKEEDGTLTIEQLDSLRDQFLDMAPKGIIGNKAFTDILIDLVTLNLGTNNFPSNWMHLTQPELQELTSLLTVNSEFVDWRKFLLVTSMPWPIPLEEELLETLQKFKAVDKEQLGTITFEQYMQAGLWFTGDEDIKIPENPLEPLPFNRQEHLIEFFFRLFADYEKDPPQLDYTQMLLYFACHPDTVEGVYRALSVAVGTHVFQQVKASIPSAEKTSSTDAGPAEEFPEPEENAAREERKLKDDTEKREQKDEEIPENANNEKMSMETLLKVFKGGSEAQDSNRFASHLKIENIYAEGFIKTFQDLGAKNLEPIEVAVLLKHPFIQDLISNYSDYKFPDIKIILQRSEHVQGSDGERSPSRHTEEKK.

The Calponin-homology (CH) domain occupies 1–105 (MSEILCQWLN…LLYQLYIALQ (105 aa)). Coiled-coil stretches lie at residues 227–260 (KALE…KDLQ), 321–396 (AHEA…KQAK), 732–758 (NQAQ…KAQK), and 871–909 (CEKV…LAEL). Disordered regions lie at residues 896 to 1004 (KEAE…VPQP), 1278 to 1327 (EEEK…EATP), 1664 to 1718 (SIPS…NNEK), and 1803 to 1822 (EHVQ…EEKK). Over residues 911–920 (LPTPPPAPPP) the composition is skewed to pro residues. Basic and acidic residues-rich tracts occupy residues 921 to 930 (EPEKEKEIHQ) and 949 to 968 (PHGK…ETAL). The span at 975 to 987 (KGKSSGGKVPVKK) shows a compositional bias: low complexity. Composition is skewed to basic and acidic residues over residues 1278–1292 (EEEK…KEKS) and 1303–1314 (KEPPKKKQEDKK). Residues 1324-1676 (EATPVIVTTE…SAEKTSSTDA (353 aa)) are interaction with IFT20. Positions 1686–1712 (EENAAREERKLKDDTEKREQKDEEIPE) form a coiled coil. Residues 1688–1708 (NAAREERKLKDDTEKREQKDE) show a composition bias toward basic and acidic residues.

As to quaternary structure, interacts (via C-terminus) with IFT20. Interacts with DYNC1I2.

It localises to the cell projection. It is found in the cilium. The protein resides in the flagellum. Its subcellular location is the cytoplasm. The protein localises to the golgi apparatus. Functionally, required for correct axoneme development in spermatozoa. Important for normal development of the manchette and sperm head morphology. Essential for male fertility. Plays a role in localization of the intraflagellar transport protein IFT20 to the manchette, suggesting function as an adapter for dynein-mediated protein transport during spermatogenesis. Also plays a role in bone growth where it seems to be required for normal osteoblast differentiation. The sequence is that of Sperm flagellar protein 2 (SPEF2) from Homo sapiens (Human).